The primary structure comprises 298 residues: GTP cyclohydrolase FolE2 (298 aa).

This sequence belongs to the GTP cyclohydrolase IV family.

It carries out the reaction GTP + H2O = 7,8-dihydroneopterin 3'-triphosphate + formate + H(+). It functions in the pathway cofactor biosynthesis; 7,8-dihydroneopterin triphosphate biosynthesis; 7,8-dihydroneopterin triphosphate from GTP: step 1/1. In terms of biological role, converts GTP to 7,8-dihydroneopterin triphosphate. The polypeptide is GTP cyclohydrolase FolE2 (Pseudomonas fluorescens (strain SBW25)).